The primary structure comprises 287 residues: Zinc finger protein SNAI3 (287 aa).

The tract at residues 1 to 20 (MPRSFLVKTHSSHRVPNYGK) is SNAG domain. C2H2-type zinc fingers lie at residues 147–169 (FECIHCHRPYHTLAGLARHQQLH), 178–200 (FTCRYCDKEYASLGALKMHIRTH), 204–226 (CICKVCGKAFSRPWLLQGHIRTH), and 232–254 (YTCSHCSRAFADRSNLRAHLQTH). The C2H2-type 5; degenerate zinc-finger motif lies at 260–282 (YRCAVCPKAFSRMSLLARHEEAG).

This sequence belongs to the snail C2H2-type zinc-finger protein family. In terms of tissue distribution, highly expressed in skeletal muscle and thymus. Lower expression in heart, lung and spleen.

Its subcellular location is the nucleus. Seems to inhibit myoblast differentiation. Transcriptional repressor of E-box-dependent transactivation of downstream myogenic bHLHs genes. Binds preferentially to the canonical E-box sequences 5'-CAGGTG-3' and 5'-CACCTG-3'. The sequence is that of Zinc finger protein SNAI3 (Snai3) from Mus musculus (Mouse).